A 306-amino-acid chain; its full sequence is Acetyl-coenzyme A carboxylase carboxyl transferase subunit beta (306 aa).

A CoA carboxyltransferase N-terminal domain is found at 25 to 294; sequence LWIKDPTSGE…VVNPSNTSST (270 aa). Positions 287-296 are enriched in low complexity; sequence NPSNTSSTNS. Positions 287–306 are disordered; that stretch reads NPSNTSSTNSQASLSKAEAA.

This sequence belongs to the AccD/PCCB family. Acetyl-CoA carboxylase is a heterohexamer composed of biotin carboxyl carrier protein (AccB), biotin carboxylase (AccC) and two subunits each of ACCase subunit alpha (AccA) and ACCase subunit beta (AccD).

The protein localises to the cytoplasm. It catalyses the reaction N(6)-carboxybiotinyl-L-lysyl-[protein] + acetyl-CoA = N(6)-biotinyl-L-lysyl-[protein] + malonyl-CoA. Its pathway is lipid metabolism; malonyl-CoA biosynthesis; malonyl-CoA from acetyl-CoA: step 1/1. Component of the acetyl coenzyme A carboxylase (ACC) complex. Biotin carboxylase (BC) catalyzes the carboxylation of biotin on its carrier protein (BCCP) and then the CO(2) group is transferred by the transcarboxylase to acetyl-CoA to form malonyl-CoA. The protein is Acetyl-coenzyme A carboxylase carboxyl transferase subunit beta of Bartonella henselae (strain ATCC 49882 / DSM 28221 / CCUG 30454 / Houston 1) (Rochalimaea henselae).